Here is a 1273-residue protein sequence, read N- to C-terminus: Ras-specific guanine nucleotide-releasing factor 1 (1273 aa).

The 108-residue stretch at 22 to 129 folds into the PH 1 domain; sequence DGTRKGYLSK…WVAAIAHASY (108 aa). The region spanning 204–229 is the IQ domain; sequence KKIKKVQSFLRGWLCRRKWKTIIQDY. Residues 240–426 form the DH domain; the sequence is KRNQVVFSML…EELSRIMHDE (187 aa). The region spanning 467 to 584 is the PH 2 domain; sequence PMSEKGKITR…WTSDISQCVD (118 aa). 2 positions are modified to phosphoserine; by PLK2: serine 577 and serine 626. The 118-residue stretch at 644-761 folds into the N-terminal Ras-GEF domain; that stretch reads KVLQIRYASV…SRRRKLSLNI (118 aa). Positions 724-754 are disordered; it reads YGEPPKSPRATRKFSSPPPLSITKTSSPSRR. Serine 758 carries the phosphoserine modification. Phosphoserine; by PLK2 occurs at positions 779 and 800. The tract at residues 809–874 is disordered; sequence TNKIPDEGDT…PKSVKNKNSS (66 aa). The span at 842-854 shows a compositional bias: acidic residues; the sequence is SDIDQNQSDDGDT. Over residues 855-867 the composition is skewed to low complexity; sequence ETSPTKSPTTPKS. Residues 1038–1270 enclose the Ras-GEF domain; it reads SALEIAEQLT…YESSLRIEPK (233 aa).

In terms of assembly, homooligomer and heterooligomer with RASGRF2. Interacts with USP8, thereby regulating its stability. In terms of processing, phosphorylated by PLK2, leading to ubiquitination and degradation by the proteasome. Ubiquitinated and degraded following phosphorylation by PLK2. Post-translationally, phosphorylated by SRC and LCK. Phosphorylation by LCK increases its capacity to stimulate the GDP/GTP exchange on Ras, whereas its phosphorylation by SRC seems not to have an effect on stimulation activity.

Functionally, promotes the exchange of Ras-bound GDP by GTP. In Homo sapiens (Human), this protein is Ras-specific guanine nucleotide-releasing factor 1 (RASGRF1).